The following is a 221-amino-acid chain: MNKGQYFWNELWCEGRISFHKEEVNPDLIAYVSSLNIPAKGRVLVPLCGKSVDMLWLVRQGYHVVGIELVEKAILQFVQEHQITVRENTIGQAKQYFTDNLNLWVTDIFALNSALIEPVDAIYDRAALVALPKKLRPAYVDICLKWLKPGGSILLKTLQYNQEKVQGPPYSVSPEEIALSYQQCAKIELLKSQKRIQEPNDHLFNLGISEVNDYVWCIRKG.

S-adenosyl-L-methionine contacts are provided by Trp-12, Leu-47, Glu-68, and Arg-125.

The protein belongs to the class I-like SAM-binding methyltransferase superfamily. TPMT family.

The protein localises to the cytoplasm. The enzyme catalyses S-adenosyl-L-methionine + a thiopurine = S-adenosyl-L-homocysteine + a thiopurine S-methylether.. The protein is Thiopurine S-methyltransferase of Legionella pneumophila (strain Paris).